The chain runs to 391 residues: MNVHEYQAKQIFAEYGVPTPKGIMAESVDAAVEAAKELGGPIWVVKAQIHAGGRGLGGGVKLAKSLDEVRELADEILGMTLVTHQTGPEGKLVQKLYIEDGADIKDEFYLSVILDRKLEMPLIMASTEGGMNIEDVAENTPEKIITVPVDPTIGFQGFHGRELAFGLGITDKAEQKNIITFAQKLYKLYMDKDAEMIEINPLVRTGSGEFLALDGKMGFDNSALYRQPEIAAMRDLSEEDPDEVEAAKYGLSYVALDGEIGCMVNGAGLAMGTMDTINHMGGTPANFLDVGGSANAETVAKGFEIILKNPNVKAIFVNIFGGIVRCDRIANGIIEATKITDVHVPVIVRLDGTNAPEAAEILKNANISNLIVAEDLGDGAAKAVAAAKGEI.

Residues 9–245 enclose the ATP-grasp domain; it reads KQIFAEYGVP…LSEEDPDEVE (237 aa). ATP is bound by residues K46, 53-55, E99, A102, and E107; that span reads GRG. Residues N200 and D214 each coordinate Mg(2+). Substrate-binding positions include N265 and 322-324; that span reads GIV.

Belongs to the succinate/malate CoA ligase beta subunit family. Heterotetramer of two alpha and two beta subunits. It depends on Mg(2+) as a cofactor.

The enzyme catalyses succinate + ATP + CoA = succinyl-CoA + ADP + phosphate. It carries out the reaction GTP + succinate + CoA = succinyl-CoA + GDP + phosphate. It participates in carbohydrate metabolism; tricarboxylic acid cycle; succinate from succinyl-CoA (ligase route): step 1/1. Its function is as follows. Succinyl-CoA synthetase functions in the citric acid cycle (TCA), coupling the hydrolysis of succinyl-CoA to the synthesis of either ATP or GTP and thus represents the only step of substrate-level phosphorylation in the TCA. The beta subunit provides nucleotide specificity of the enzyme and binds the substrate succinate, while the binding sites for coenzyme A and phosphate are found in the alpha subunit. The sequence is that of Succinate--CoA ligase [ADP-forming] subunit beta from Sulfurovum sp. (strain NBC37-1).